The chain runs to 427 residues: Glutamate-1-semialdehyde 2,1-aminomutase (427 aa).

K265 carries the post-translational modification N6-(pyridoxal phosphate)lysine.

The protein belongs to the class-III pyridoxal-phosphate-dependent aminotransferase family. HemL subfamily. Homodimer. The cofactor is pyridoxal 5'-phosphate.

It is found in the cytoplasm. It carries out the reaction (S)-4-amino-5-oxopentanoate = 5-aminolevulinate. The protein operates within porphyrin-containing compound metabolism; protoporphyrin-IX biosynthesis; 5-aminolevulinate from L-glutamyl-tRNA(Glu): step 2/2. The chain is Glutamate-1-semialdehyde 2,1-aminomutase from Pseudomonas paraeruginosa (strain DSM 24068 / PA7) (Pseudomonas aeruginosa (strain PA7)).